We begin with the raw amino-acid sequence, 267 residues long: Staphylococcal secretory antigen ssaA2 (267 aa).

Positions 1–27 (MKKIATATIATAGFATIAIASGNQAHA) are cleaved as a signal peptide. A run of 7 repeats spans residues 83-85 (YNN), 86-88 (YNN), 89-91 (YNN), 95-97 (YNN), 101-103 (YNN), 104-106 (YSN), and 113-115 (YNN). The 7 X 3 AA repeats of Y-[NS]-N stretch occupies residues 83-115 (YNNYNNYNNGYSYNNYSRYNNYSNNNQSYNYNN). The region spanning 146-267 (MAPSSNGRSI…SQAAGYNFIH (122 aa)) is the Peptidase C51 domain.

The protein localises to the secreted. Its function is as follows. Not known; immunogenic protein. The protein is Staphylococcal secretory antigen ssaA2 (ssaA2) of Staphylococcus aureus (strain NCTC 8325 / PS 47).